Consider the following 755-residue polypeptide: Dynamin-1-like protein (755 aa).

Methionine 1 bears the N-acetylmethionine mark. Residues isoleucine 22 to proline 315 form the Dynamin-type G domain. Residues glycine 32–serine 39 form a G1 motif region. Glycine 32–serine 40 provides a ligand contact to GTP. Positions valine 58–arginine 60 are G2 motif. Residues aspartate 159–glycine 162 form a G3 motif region. The interval threonine 228–aspartate 231 is G4 motif. Residues threonine 228–aspartate 234 and asparagine 259–glutamine 262 each bind GTP. The tract at residues valine 258–serine 261 is G5 motif. A middle domain region spans residues tyrosine 357–isoleucine 502. The interval asparagine 461 to glutamate 704 is interaction with GSK3B. The segment at alanine 515–asparagine 582 is b domain. The segment at glutamate 536–glycine 610 is disordered. At serine 542 the chain carries Phosphoserine. Glycyl lysine isopeptide (Lys-Gly) (interchain with G-Cter in SUMO) cross-links involve residues lysine 545 and lysine 548. The segment covering proline 550–glutamate 567 has biased composition (low complexity). Serine 561 is subject to Phosphoserine. Positions alanine 568 to lysine 581 are enriched in basic and acidic residues. Glycyl lysine isopeptide (Lys-Gly) (interchain with G-Cter in SUMO) cross-links involve residues lysine 571 and lysine 581. Residues alanine 586 to glycine 600 show a composition bias toward gly residues. O-linked (GlcNAc) threonine glycosylation is found at threonine 604 and threonine 605. Lysine 613 is covalently cross-linked (Glycyl lysine isopeptide (Lys-Gly) (interchain with G-Cter in SUMO)). Lysine 616 is subject to N6-acetyllysine; alternate. Lysine 616 is covalently cross-linked (Glycyl lysine isopeptide (Lys-Gly) (interchain with G-Cter in SUMO); alternate). Lysine 625 is covalently cross-linked (Glycyl lysine isopeptide (Lys-Gly) (interchain with G-Cter in SUMO)). At serine 626 the chain carries Phosphoserine. Lysine 627 participates in a covalent cross-link: Glycyl lysine isopeptide (Lys-Gly) (interchain with G-Cter in SUMO). Serine 635 is subject to Phosphoserine; by CDK1. At serine 656 the chain carries Phosphoserine; by CAMK1 and PKA. Cysteine 663 is subject to S-nitrosocysteine. In terms of domain architecture, GED spans cysteine 663–leucine 754. Residues tyrosine 673 to lysine 687 are important for homodimerization.

This sequence belongs to the TRAFAC class dynamin-like GTPase superfamily. Dynamin/Fzo/YdjA family. Homotetramer; dimerizes through the N-terminal GTP-middle region of one molecule binding to the GED domain of another DNM1L molecule. Oligomerizes in a GTP-dependent manner to form membrane-associated tubules with a spiral pattern. Interacts with GSK3B and MARCHF5. Interacts (via the GTPase and B domains) with UBE2I; the interaction promotes sumoylation of DNM1L, mainly in its B domain. Interacts with PPP3CA; the interaction dephosphorylates DNM1L and regulates its transition to mitochondria. Interacts with BCL2L1 isoform BCL-X(L) and CLTA; DNM1L and BCL2L1 isoform BCL-X(L) may form a complex in synaptic vesicles that also contains clathrin and MFF. Interacts with MFF; the interaction is inhinited by C11orf65/MFI. Interacts with FIS1. Interacts with MIEF2 and MIEF1; GTP-dependent this regulates GTP hydrolysis and DNM1L oligomerization. Interacts with PGAM5; this interaction leads to dephosphorylation at Ser-656 and activation of GTPase activity and eventually to mitochondria fragmentation. Interacts with RALBP1; during mitosis, recruits DNM1L to the mitochondrion and mediates its activation by the mitotic kinase cyclin B-CDK1. Interacts with FUNDC1; this interaction recruits DNM1L/DRP1 at ER-mitochondria contact sites. Post-translationally, phosphorylation/dephosphorylation events on two sites near the GED domain regulate mitochondrial fission. Phosphorylation on Ser-656 by CAMK1 and PKA inhibits the GTPase activity, leading to a defect in mitochondrial fission promoting mitochondrial elongation. Dephosphorylated on this site by PPP3CA which promotes mitochondrial fission. Phosphorylation on Ser-635 by PINK1 activates the GTPase activity and promotes mitochondrial fission. Phosphorylation on Ser-635 by CDK1 also promotes mitochondrial fission. Phosphorylated in a circadian manner at Ser-656. Dephosphorylated by PGAM5. Sumoylated on various lysine residues within the B domain, probably by MUL1. Sumoylation positively regulates mitochondrial fission. Desumoylated by SENP5 during G2/M transition of mitosis. Appears to be linked to its catalytic activity. In terms of processing, S-nitrosylation increases DNM1L dimerization, mitochondrial fission and causes neuronal damage. Post-translationally, O-GlcNAcylation augments the level of the GTP-bound active form of DNM1L and induces translocation from the cytoplasm to mitochondria in cardiomyocytes. It also decreases phosphorylation at Ser-656. Ubiquitination by MARCHF5 affects mitochondrial morphology. Expressed in all tissues tested (at protein level). Longer isoforms are preferentially expressed in brain.

It is found in the cytoplasm. It localises to the cytosol. The protein localises to the golgi apparatus. Its subcellular location is the endomembrane system. The protein resides in the mitochondrion outer membrane. It is found in the peroxisome. It localises to the membrane. The protein localises to the clathrin-coated pit. Its subcellular location is the cytoplasmic vesicle. The protein resides in the secretory vesicle. It is found in the synaptic vesicle membrane. It carries out the reaction GTP + H2O = GDP + phosphate + H(+). Functionally, functions in mitochondrial and peroxisomal division. Mediates membrane fission through oligomerization into membrane-associated tubular structures that wrap around the scission site to constrict and sever the mitochondrial membrane through a GTP hydrolysis-dependent mechanism. The specific recruitment at scission sites is mediated by membrane receptors like MFF, MIEF1 and MIEF2 for mitochondrial membranes. While the recruitment by the membrane receptors is GTP-dependent, the following hydrolysis of GTP induces the dissociation from the receptors and allows DNM1L filaments to curl into closed rings that are probably sufficient to sever a double membrane. Acts downstream of PINK1 to promote mitochondrial fission in a PRKN-dependent manner. Plays an important role in mitochondrial fission during mitosis. Through its function in mitochondrial division, ensures the survival of at least some types of postmitotic neurons, including Purkinje cells, by suppressing oxidative damage. Required for normal brain development, including that of cerebellum. Facilitates developmentally regulated apoptosis during neural tube formation. Required for a normal rate of cytochrome c release and caspase activation during apoptosis; this requirement may depend upon the cell type and the physiological apoptotic cues. Required for formation of endocytic vesicles. Proposed to regulate synaptic vesicle membrane dynamics through association with BCL2L1 isoform Bcl-X(L) which stimulates its GTPase activity in synaptic vesicles; the function may require its recruitment by MFF to clathrin-containing vesicles. Required for programmed necrosis execution. Rhythmic control of its activity following phosphorylation at Ser-656 is essential for the circadian control of mitochondrial ATP production. This is Dynamin-1-like protein from Rattus norvegicus (Rat).